We begin with the raw amino-acid sequence, 341 residues long: L-threonine 3-dehydrogenase (341 aa).

Cys-38 is a Zn(2+) binding site. Catalysis depends on charge relay system residues Thr-40 and His-43. His-63, Glu-64, Cys-93, Cys-96, Cys-99, and Cys-107 together coordinate Zn(2+). NAD(+) contacts are provided by residues Ile-175, Asp-195, Arg-200, 262 to 264 (LGI), and 286 to 287 (IY).

This sequence belongs to the zinc-containing alcohol dehydrogenase family. In terms of assembly, homotetramer. Zn(2+) is required as a cofactor.

The protein resides in the cytoplasm. It catalyses the reaction L-threonine + NAD(+) = (2S)-2-amino-3-oxobutanoate + NADH + H(+). Its pathway is amino-acid degradation; L-threonine degradation via oxydo-reductase pathway; glycine from L-threonine: step 1/2. Functionally, catalyzes the NAD(+)-dependent oxidation of L-threonine to 2-amino-3-ketobutyrate. The sequence is that of L-threonine 3-dehydrogenase from Escherichia coli O17:K52:H18 (strain UMN026 / ExPEC).